The chain runs to 212 residues: uncharacterized protein (212 aa).

S-adenosyl-L-methionine contacts are provided by Gly-53, Glu-74, and Asp-97.

It belongs to the methyltransferase superfamily. YrrT family.

Its function is as follows. Could be a S-adenosyl-L-methionine-dependent methyltransferase. This is an uncharacterized protein from Bacillus cereus (strain 03BB102).